The primary structure comprises 396 residues: 1-deoxy-D-xylulose 5-phosphate reductoisomerase (396 aa).

NADPH is bound by residues T13, G14, S15, I16, and N127. 1-deoxy-D-xylulose 5-phosphate is bound at residue K128. E129 contacts NADPH. Residue D153 participates in Mn(2+) binding. Residues S154, E155, S184, and H207 each coordinate 1-deoxy-D-xylulose 5-phosphate. E155 lines the Mn(2+) pocket. Position 213 (G213) interacts with NADPH. 1-deoxy-D-xylulose 5-phosphate contacts are provided by S220, N225, K226, and E229. E229 is a Mn(2+) binding site.

The protein belongs to the DXR family. Mg(2+) serves as cofactor. The cofactor is Mn(2+).

The enzyme catalyses 2-C-methyl-D-erythritol 4-phosphate + NADP(+) = 1-deoxy-D-xylulose 5-phosphate + NADPH + H(+). It participates in isoprenoid biosynthesis; isopentenyl diphosphate biosynthesis via DXP pathway; isopentenyl diphosphate from 1-deoxy-D-xylulose 5-phosphate: step 1/6. Catalyzes the NADPH-dependent rearrangement and reduction of 1-deoxy-D-xylulose-5-phosphate (DXP) to 2-C-methyl-D-erythritol 4-phosphate (MEP). This chain is 1-deoxy-D-xylulose 5-phosphate reductoisomerase, found in Stutzerimonas stutzeri (strain A1501) (Pseudomonas stutzeri).